Here is a 631-residue protein sequence, read N- to C-terminus: Probable basic-leucine zipper transcription factor F (631 aa).

A coiled-coil region spans residues 35 to 62; that stretch reads KKNANVFNNFQQQQQQIQQQNKQSNGLI. 3 disordered regions span residues 46–117, 154–207, and 264–406; these read QQQQ…HNNI, LNNS…NNQF, and MLNV…ERHQ. Low complexity-rich tracts occupy residues 155-206 and 271-360; these read NNSY…NNNQ and NNAN…GSNN. The stretch at 328-366 forms a coiled coil; that stretch reads NNNNNNSNNISTQINNLNNNINNQNNQLNGSNNGKKKEE. The 64-residue stretch at 405–468 folds into the bZIP domain; that stretch reads HQKRQRRLVK…KLIREQLLYL (64 aa). Residues 407 to 427 form a basic motif region; sequence KRQRRLVKNREAAQLFRQRQK. A leucine-zipper region spans residues 433–440; sequence LEKKVSDL. The disordered stretch occupies residues 546–631; it reads QGNLLGTPIP…PPQQSTPNQR (86 aa). Composition is skewed to low complexity over residues 563-609 and 618-631; these read SNSG…PNSS and PQNT…PNQR.

This sequence belongs to the bZIP family.

It localises to the nucleus. Probable transcriptional regulator. This chain is Probable basic-leucine zipper transcription factor F (bzpF), found in Dictyostelium discoideum (Social amoeba).